Consider the following 111-residue polypeptide: Cornifelin (111 aa).

It belongs to the cornifelin family. Directly or indirectly cross-linked to CE proteins loricin and involucrin (IVL).

It is found in the cytoplasm. Part of the insoluble cornified cell envelope (CE) of stratified squamous epithelia. The sequence is that of Cornifelin (Cnfn) from Mus musculus (Mouse).